The chain runs to 91 residues: Small ribosomal subunit protein uS17 (91 aa).

This sequence belongs to the universal ribosomal protein uS17 family. Part of the 30S ribosomal subunit.

In terms of biological role, one of the primary rRNA binding proteins, it binds specifically to the 5'-end of 16S ribosomal RNA. The sequence is that of Small ribosomal subunit protein uS17 from Thermobifida fusca (strain YX).